The chain runs to 656 residues: DNA ligase (656 aa).

Residues 32 to 36 (DAVYD) and 81 to 82 (SL) each bind NAD(+). Lysine 112 acts as the N6-AMP-lysine intermediate in catalysis. 3 residues coordinate NAD(+): arginine 133, glutamate 167, and lysine 306. Zn(2+) contacts are provided by cysteine 400, cysteine 403, cysteine 416, and cysteine 421. The 80-residue stretch at 577–656 (ESSSVFSNKT…ELLKRLKEFD (80 aa)) folds into the BRCT domain.

Belongs to the NAD-dependent DNA ligase family. LigA subfamily. Requires Mg(2+) as cofactor. Mn(2+) is required as a cofactor.

It catalyses the reaction NAD(+) + (deoxyribonucleotide)n-3'-hydroxyl + 5'-phospho-(deoxyribonucleotide)m = (deoxyribonucleotide)n+m + AMP + beta-nicotinamide D-nucleotide.. Its function is as follows. DNA ligase that catalyzes the formation of phosphodiester linkages between 5'-phosphoryl and 3'-hydroxyl groups in double-stranded DNA using NAD as a coenzyme and as the energy source for the reaction. It is essential for DNA replication and repair of damaged DNA. This chain is DNA ligase, found in Helicobacter pylori (strain Shi470).